The following is a 338-amino-acid chain: DNA-directed RNA polymerase subunit alpha (338 aa).

The alpha N-terminal domain (alpha-NTD) stretch occupies residues 1-234; the sequence is MIQKNWQELI…DQLQLFINFE (234 aa). An alpha C-terminal domain (alpha-CTD) region spans residues 250–338; that stretch reads FNKNLLRKVD…ELAKKLEEPY (89 aa).

Belongs to the RNA polymerase alpha chain family. Homodimer. The RNAP catalytic core consists of 2 alpha, 1 beta, 1 beta' and 1 omega subunit. When a sigma factor is associated with the core the holoenzyme is formed, which can initiate transcription.

The catalysed reaction is RNA(n) + a ribonucleoside 5'-triphosphate = RNA(n+1) + diphosphate. DNA-dependent RNA polymerase catalyzes the transcription of DNA into RNA using the four ribonucleoside triphosphates as substrates. The protein is DNA-directed RNA polymerase subunit alpha of Paramagnetospirillum magneticum (strain ATCC 700264 / AMB-1) (Magnetospirillum magneticum).